The following is a 596-amino-acid chain: Pentatricopeptide repeat-containing protein At1g80270, mitochondrial (596 aa).

Residues 1–69 (MFALSKVLRR…RALSSSAGTK (69 aa)) constitute a mitochondrion transit peptide. The interval 62–119 (LSSSAGTKSDQEEDDLEDGFSELEGSKSGQGSTSSDEDEGKLSADEEEEEELDLIETD) is disordered. Composition is skewed to acidic residues over residues 72 to 82 (QEEDDLEDGFS) and 96 to 117 (SDED…DLIE). PPR repeat units lie at residues 228-262 (GEVL…GFPL), 263-296 (SGFT…NIKP), 297-331 (SLLT…GVEL), 332-366 (DFQT…SLEA), 367-397 (NRRA…CESK), 399-433 (YFEE…DRRA), 434-468 (SSST…GCRI), 469-503 (EATT…SHTK), and 505-539 (MMNS…GYTS).

This sequence belongs to the PPR family. P subfamily.

The protein localises to the mitochondrion. The chain is Pentatricopeptide repeat-containing protein At1g80270, mitochondrial from Arabidopsis thaliana (Mouse-ear cress).